We begin with the raw amino-acid sequence, 371 residues long: Protein NDRG2 (371 aa).

Positions Met-1 to Glu-22 are disordered. Ala-2 carries the N-acetylalanine modification. Position 20 is a phosphothreonine (Thr-20). Phosphoserine occurs at positions 326 and 328. Position 330 is a phosphothreonine (Thr-330). Residue Ser-332 is modified to Phosphoserine. At Thr-334 the chain carries Phosphothreonine. The interval Thr-334–Cys-371 is disordered. Residues Ser-335, Ser-338, and Ser-344 each carry the phosphoserine modification. A Phosphothreonine modification is found at Thr-348. Residues Ser-350, Ser-352, Ser-353, and Ser-355 each carry the phosphoserine modification. Thr-357 carries the phosphothreonine modification. Position 370 is a phosphoserine (Ser-370).

The protein belongs to the NDRG family. Broadly expressed, with highest levels in heart, liver, skeletal muscle and aorta.

It localises to the cytoplasm. Its subcellular location is the perinuclear region. It is found in the cell projection. The protein localises to the growth cone. Functionally, contributes to the regulation of the Wnt signaling pathway. Down-regulates CTNNB1-mediated transcriptional activation of target genes, such as CCND1, and may thereby act as tumor suppressor. May be involved in dendritic cell and neuron differentiation. The chain is Protein NDRG2 (Ndrg2) from Rattus norvegicus (Rat).